The sequence spans 387 residues: TSC22 domain family protein 4 (387 aa).

2 disordered regions span residues 1–85 and 135–232; these read MSGG…GEPY and ISTP…RRDG. Positions 28-51 are enriched in pro residues; the sequence is SDPPAPPAPAGPPPRLPNGEPNPD. T57 carries the post-translational modification Phosphothreonine. Residues S62 and S165 each carry the phosphoserine modification. Residue T183 is modified to Phosphothreonine. Phosphoserine occurs at positions 187 and 189. At T223 the chain carries Phosphothreonine. Residues S254, S258, and S271 each carry the phosphoserine modification. The interval 336–357 is leucine-zipper; the sequence is LKEQIRDLAERNAALEQENGLL. Phosphoserine is present on S362. Residues 368–387 are disordered; sequence QLPSSGLPRLGPSAPNGPSI.

The protein belongs to the TSC-22/Dip/Bun family. In terms of assembly, forms a homodimer or heterodimer. Forms a heterodimer with TSC22D1 isoforms 1 and 2. Interacts with NRBP1.

The protein localises to the nucleus. It localises to the cytoplasm. It is found in the cell projection. The protein resides in the dendrite. Its subcellular location is the synapse. Binds DNA and acts as a transcriptional repressor. Involved in the regulation of systematic glucose homeostasis and insulin sensitivity, via transcriptional repression of downstream insulin signaling targets such as OBP2A/LCN13. Acts as a negative regulator of lipogenic gene expression in hepatocytes and thereby mediates the control of very low-density lipoprotein release. May play a role in neurite elongation and survival. This chain is TSC22 domain family protein 4, found in Rattus norvegicus (Rat).